The chain runs to 196 residues: GTP cyclohydrolase 1 (196 aa).

The Zn(2+) site is built by C86, H89, and C158.

The protein belongs to the GTP cyclohydrolase I family. As to quaternary structure, homomer.

The catalysed reaction is GTP + H2O = 7,8-dihydroneopterin 3'-triphosphate + formate + H(+). It participates in cofactor biosynthesis; 7,8-dihydroneopterin triphosphate biosynthesis; 7,8-dihydroneopterin triphosphate from GTP: step 1/1. The polypeptide is GTP cyclohydrolase 1 (Clostridium botulinum (strain Kyoto / Type A2)).